The primary structure comprises 412 residues: MNIYLVGGAVRDSLLNLPVTEQDWVVVGATPEQLLKLGYQQVGKDFPVFLHPVSHEEYALARTERKSGQGYTGFTCYAAPDVTLEDDLLRRDLTVNAIARSADGEFIDPYHGKQDLENRVLRHVSDAFGEDPLRVLRVARFAARFAYLGFTIAPETMSLMSNMAQSGELSALTPERVWKETEKALKTQSPHVYFQVLRDCGALAVLFPEIERLFGVPAPEKWHPEIDTGIHTLMTLAIAAQLSPEVDIRFAALCHDLGKGLTPKEHWPHHHGHGPAGVKLVEQLCQRLRIPNPVRDLAKLVAEYHDLIHTVNKLRPETLLKLFNAIDVWRKPERLEQMIMTSEADARGRTGFENNPYPQGDYLRAAFQIANGVSIQEVVASGLQGLAIRDELQRRRQQALAEWKQTQETASI.

Residues G8 and R11 each coordinate ATP. G8 and R11 together coordinate CTP. Mg(2+)-binding residues include E21 and D23. Residues R91, R137, and R140 each contribute to the ATP site. Residues R91, R137, and R140 each coordinate CTP. In terms of domain architecture, HD spans 228–329 (TGIHTLMTLA…LKLFNAIDVW (102 aa)).

This sequence belongs to the tRNA nucleotidyltransferase/poly(A) polymerase family. Bacterial CCA-adding enzyme type 1 subfamily. In terms of assembly, monomer. Can also form homodimers and oligomers. Mg(2+) is required as a cofactor. It depends on Ni(2+) as a cofactor.

The enzyme catalyses a tRNA precursor + 2 CTP + ATP = a tRNA with a 3' CCA end + 3 diphosphate. It catalyses the reaction a tRNA with a 3' CCA end + 2 CTP + ATP = a tRNA with a 3' CCACCA end + 3 diphosphate. Catalyzes the addition and repair of the essential 3'-terminal CCA sequence in tRNAs without using a nucleic acid template. Adds these three nucleotides in the order of C, C, and A to the tRNA nucleotide-73, using CTP and ATP as substrates and producing inorganic pyrophosphate. tRNA 3'-terminal CCA addition is required both for tRNA processing and repair. Also involved in tRNA surveillance by mediating tandem CCA addition to generate a CCACCA at the 3' terminus of unstable tRNAs. While stable tRNAs receive only 3'-terminal CCA, unstable tRNAs are marked with CCACCA and rapidly degraded. This Yersinia pestis protein is Multifunctional CCA protein.